We begin with the raw amino-acid sequence, 122 residues long: uncharacterized protein (122 aa).

The protein resides in the mitochondrion. This is an uncharacterized protein from Claviceps purpurea (Ergot fungus).